Reading from the N-terminus, the 304-residue chain is Acetyl-coenzyme A carboxylase carboxyl transferase subunit beta (304 aa).

Positions 23-292 constitute a CoA carboxyltransferase N-terminal domain; it reads VWTKCDSCGQ…PNPEAPREGV (270 aa). The Zn(2+) site is built by Cys-27, Cys-30, Cys-46, and Cys-49. The segment at 27 to 49 adopts a C4-type zinc-finger fold; sequence CDSCGQVLYRAELERNLEVCPKC. The tract at residues 284 to 304 is disordered; it reads NPEAPREGVVVPPVPDQEPEA. The span at 295–304 shows a compositional bias: pro residues; it reads PPVPDQEPEA.

The protein belongs to the AccD/PCCB family. Acetyl-CoA carboxylase is a heterohexamer composed of biotin carboxyl carrier protein (AccB), biotin carboxylase (AccC) and two subunits each of ACCase subunit alpha (AccA) and ACCase subunit beta (AccD). Zn(2+) is required as a cofactor.

The protein localises to the cytoplasm. It carries out the reaction N(6)-carboxybiotinyl-L-lysyl-[protein] + acetyl-CoA = N(6)-biotinyl-L-lysyl-[protein] + malonyl-CoA. The protein operates within lipid metabolism; malonyl-CoA biosynthesis; malonyl-CoA from acetyl-CoA: step 1/1. Component of the acetyl coenzyme A carboxylase (ACC) complex. Biotin carboxylase (BC) catalyzes the carboxylation of biotin on its carrier protein (BCCP) and then the CO(2) group is transferred by the transcarboxylase to acetyl-CoA to form malonyl-CoA. The polypeptide is Acetyl-coenzyme A carboxylase carboxyl transferase subunit beta (Shigella flexneri serotype 5b (strain 8401)).